A 778-amino-acid chain; its full sequence is Protein SPT2 homolog (778 aa).

Disordered stretches follow at residues 1–21, 50–625, and 639–685; these read MDFH…GIAK, KKDE…AKPK, and VPKS…DDDD. The important for interaction with DNA stretch occupies residues 1–665; the sequence is MDFHSVLKMA…PGHRPAMRPP (665 aa). A coiled-coil region spans residues 44–83; that stretch reads VQAFLRKKDEESRRKETVEKRKKEDLLAKRKELKHDRKAR. Residues 50–78 show a composition bias toward basic and acidic residues; that stretch reads KKDEESRRKETVEKRKKEDLLAKRKELKH. Residues 114-135 are compositionally biased toward acidic residues; sequence EEDQNDNMAAEGEEYMTEEELY. Residues 153–167 are compositionally biased toward pro residues; that stretch reads QKVPKPAPGKKPPTP. The segment covering 190–227 has biased composition (basic and acidic residues); the sequence is RPVKKEERLRTAEELKELEFLERKAQKADRKDPKRNEQ. Residues 193-221 adopt a coiled-coil conformation; that stretch reads KKEERLRTAEELKELEFLERKAQKADRKD. Residues 242 to 269 are compositionally biased toward polar residues; that stretch reads LKGTHSGNSKSSSTEQNGTIRKSSSDTG. Positions 270–286 are enriched in basic and acidic residues; it reads SRTEKSGSVFHTKESKK. Low complexity predominate over residues 312–335; it reads SSQPSAASNSAFGRPSGSARPSGS. 2 stretches are compositionally biased toward gly residues: residues 336-357 and 365-384; these read SGPG…GGSA and GGSG…GKPI. Over residues 385 to 394 the composition is skewed to low complexity; it reads GGLHSSHGSG. Positions 395–417 are enriched in gly residues; the sequence is KPTGGTGSGSGKPTGASGSGSGK. 2 stretches are compositionally biased toward low complexity: residues 418-493 and 506-559; these read PTGS…SGSA and GSGS…PSSS. Polar residues predominate over residues 588–604; sequence VRPNSTSVPGSARSSLG. The span at 662–671 shows a compositional bias: pro residues; sequence MRPPGPPLPP. The tract at residues 666–778 is important for interaction with histones; the sequence is GPPLPPITSS…QLKAAKKMSR (113 aa). Residues 735 to 778 are a coiled coil; the sequence is REQQKEEARSLRLGIQEDLEELQREEEELKRKAKQLKAAKKMSR.

Belongs to the SPT2 family. As to quaternary structure, interacts with histones. Interacts with a heterotetrameric complex formed by histone H3 and H4, especially when the histone tetramer is not bound to DNA.

It localises to the nucleus. It is found in the nucleolus. Histone chaperone that stabilizes pre-existing histone tetramers and regulates replication-independent histone exchange on chromatin. Required for normal chromatin refolding in the coding region of transcribed genes, and for the suppression of spurious transcription. Binds DNA and histones and promotes nucleosome assembly (in vitro). Facilitates formation of tetrameric histone complexes containing histone H3 and H4. Modulates RNA polymerase 1-mediated transcription. Binds DNA, with a preference for branched DNA species, such as Y-form DNA and Holliday junction DNA. The polypeptide is Protein SPT2 homolog (spty2d1) (Xenopus tropicalis (Western clawed frog)).